Consider the following 400-residue polypeptide: AA13 family lytic polysaccharide monooxygenase A (400 aa).

The N-terminal stretch at 1–17 (MLLTVLAVVGCFTAVNG) is a signal peptide. Histidine 18 lines the Cu(2+) pocket. Position 18 is a methylhistidine (histidine 18). In terms of domain architecture, Chitin-binding type-4 spans 18-247 (HGYLTIPASR…AQVYLHCADI (230 aa)). 7 disulfide bridges follow: cysteine 39/cysteine 42, cysteine 65/cysteine 244, cysteine 101/cysteine 202, cysteine 117/cysteine 144, cysteine 152/cysteine 160, cysteine 166/cysteine 172, and cysteine 180/cysteine 191. Histidine 108 is a Cu(2+) binding site. N-linked (GlcNAc...) asparagine glycosylation is present at asparagine 119. Cu(2+) is bound at residue tyrosine 241. The disordered stretch occupies residues 254 to 287 (GGTTSKSTTSTTSTTSTSRSTSTSAPTTTSSAST). Residues 257 to 287 (TSKSTTSTTSTTSTSRSTSTSAPTTTSSAST) are compositionally biased toward low complexity. The region spanning 293 to 400 (TTQASLIPVT…TTATAAASWR (108 aa)) is the CBM20 domain. N-linked (GlcNAc...) asparagine glycosylation occurs at asparagine 379.

This sequence belongs to the polysaccharide monooxygenase AA13 family. Requires Cu(2+) as cofactor. In terms of processing, O-mannosylated.

Its subcellular location is the secreted. The catalysed reaction is starch + reduced acceptor + O2 = D-glucono-1,5-lactone-terminated malto-oligosaccharides + short-chain malto-oligosaccharides + acceptor + H2O.. Its activity is regulated as follows. Activity is inhibited by both beta-cyclodextrin or amylose that block the access to the active site. Starch-active lytic polysaccharide monooxygenase that oxidizes the C1 position of starch substrates. Catalysis by LPMOs requires the reduction of the active-site copper from Cu(II) to Cu(I) by a reducing agent and H(2)O(2) or O(2) as a cosubstrate. This chain is AA13 family lytic polysaccharide monooxygenase A, found in Aspergillus terreus (strain NIH 2624 / FGSC A1156).